Reading from the N-terminus, the 657-residue chain is Transmembrane protein 232 (657 aa).

Helical transmembrane passes span 168 to 188 and 353 to 373; these read IGYLVFLRLFIFFLHGHLESF and WAWNVVYIYTVILAEICLYAA.

It localises to the membrane. Plays a critical role for male fertility and sperm motility by regulating sperm cytoplasm removal and maintaining axoneme integrity. This is Transmembrane protein 232 (TMEM232) from Homo sapiens (Human).